A 365-amino-acid chain; its full sequence is Class I histocompatibility antigen, Gogo-A*0201 alpha chain (365 aa).

The first 24 residues, 1 to 24 (MAVMAPRTLLLLLLGALALTQTWA), serve as a signal peptide directing secretion. The segment at 25-114 (GSHSMRYFST…LRGYYNQSEA (90 aa)) is alpha-1. The Extracellular portion of the chain corresponds to 25–308 (GSHSMRYFST…EPSSQPTIPI (284 aa)). An N-linked (GlcNAc...) asparagine glycan is attached at asparagine 110. The tract at residues 115–206 (GSHTIQKMYG…ENGKETLQRT (92 aa)) is alpha-2. 2 disulfide bridges follow: cysteine 125/cysteine 188 and cysteine 227/cysteine 283. Residues 207–298 (DAPKTHMTHH…SLPKPLTLRW (92 aa)) form an alpha-3 region. Residues 209–295 (PKTHMTHHAV…QHESLPKPLT (87 aa)) enclose the Ig-like C1-type domain. The segment at 299–308 (EPSSQPTIPI) is connecting peptide. Residues 309-332 (VGIIAGLVLFGAVIAGAVIAAVRW) form a helical membrane-spanning segment. The Cytoplasmic portion of the chain corresponds to 333 to 365 (RRKSSDRKGGSYSQAASSDSAQGSDVSLTACKV). The tract at residues 338–365 (DRKGGSYSQAASSDSAQGSDVSLTACKV) is disordered. A compositionally biased stretch (low complexity) spans 342–359 (GSYSQAASSDSAQGSDVS). A Phosphoserine modification is found at serine 343. Position 344 is a phosphotyrosine (tyrosine 344). Phosphoserine is present on residues serine 345, serine 349, serine 350, serine 352, serine 356, and serine 359.

It belongs to the MHC class I family. In terms of assembly, heterodimer of an alpha chain and a beta chain (beta-2-microglobulin).

The protein resides in the membrane. Involved in the presentation of foreign antigens to the immune system. This chain is Class I histocompatibility antigen, Gogo-A*0201 alpha chain, found in Gorilla gorilla gorilla (Western lowland gorilla).